The following is an 878-amino-acid chain: MLTGKEIREKYLRFFEQRGHQILPSASLIPHNDPSILWTAAGMVPFKPFFTGQAVPEYQRVTTCQKCIRTPDIESVGRTARHHTFFEMLGNFSFGDYFKESIIPWAWEFITKELNLPKEKLWITIYQDDDEAFEIWNKVVGIPSERIVRLGKDTNFWEIGVGPCGPCSEIYVDLGEARGCGSPECQVGCDCDRFLEIWNLVFIQFFRDEEGNYSPLENKGIDTGMGLERVASVLQGVASNFDTDIFREIMDFTANLAGQEYGQKADIDLALKVIADHCRAVTFAVSDGALPGNEGRGYVIRRLLRRAVRFGRVLGVREPFLYKVAQAVIKQMQDAYPELKQKAEHVLRVIRTEEERFLETLAAGSDILSALINEAKASGASEITGDDAFKLYDTFGFPLELTQEIAEEQGLAVDVEVFNAAMEEQRKRARSARQETEYLSERGVLYKALREELGETRFIGYSALEADSNIMALLKDGMQEISAVAGEEVEIVLDVTPCYAESGGQVADHAILRGPDLEVEITSVNKPVEGLVIHRGKVLSGIIKRHDSVKAIVDQPRRQDTARNHSATHLLHKALKEVLGDHVNQAGSLVEPDRLRFDFTHYAAVTSEELRRIEEIVNEAVLSNLSIEVFETSLSKAKEMGAAALFGEKYGKQVRVVKMGDFSMELCGGTHLTSTAEVGLFKIFNETSVGAGLRRIEAVTGTGVLKYLKAKEEQLEEIASVIKSPMHELVRRSEALVQQNKSLEQEIEALRNKLAKSEVQDILGNIKRAKEVPVLASVVAAPDMDNLRGMVDMLRDKMGSGVILLGSTAGEKVNLVAAVTKDLHGQGLHAGNLVKEIAKMVGGGGGGRPDMAQAGGKNPEKLQEAIDQVCRVVEGQIK.

The Zn(2+) site is built by His-565, His-569, Cys-667, and His-671.

This sequence belongs to the class-II aminoacyl-tRNA synthetase family. Zn(2+) is required as a cofactor.

It localises to the cytoplasm. The catalysed reaction is tRNA(Ala) + L-alanine + ATP = L-alanyl-tRNA(Ala) + AMP + diphosphate. Its function is as follows. Catalyzes the attachment of alanine to tRNA(Ala) in a two-step reaction: alanine is first activated by ATP to form Ala-AMP and then transferred to the acceptor end of tRNA(Ala). Also edits incorrectly charged Ser-tRNA(Ala) and Gly-tRNA(Ala) via its editing domain. This chain is Alanine--tRNA ligase, found in Desulforamulus reducens (strain ATCC BAA-1160 / DSM 100696 / MI-1) (Desulfotomaculum reducens).